The chain runs to 85 residues: Toxin To6 (85 aa).

The N-terminal stretch at 1-20 is a signal peptide; the sequence is MSIFPIILALLLIGLDEGEA. In terms of domain architecture, LCN-type CS-alpha/beta spans 21 to 83; that stretch reads LDGYPLSKNN…EMYPGRLPCN (63 aa). 4 cysteine pairs are disulfide-bonded: Cys32–Cys82, Cys36–Cys59, Cys42–Cys64, and Cys46–Cys66.

As to expression, expressed by the venom gland.

It localises to the secreted. Its function is as follows. Beta toxins bind voltage-independently at site-4 of sodium channels (Nav) and shift the voltage of activation toward more negative potentials thereby affecting sodium channel activation and promoting spontaneous and repetitive firing. The polypeptide is Toxin To6 (Tityus obscurus (Amazonian scorpion)).